A 224-amino-acid polypeptide reads, in one-letter code: MNNYNMNPSLFQNYTWNNIINSSNNNNKNDDHHHQHNNDPIGMAMDQYTQLHIFNPFSSSHFPPLSSSLTTTTLLSGDQEDDEDEEEPLEELGAMKEMMYKIAAMQSVDIDPATVKKPKRRNVRISDDPQSVAARHRRERISERIRILQRLVPGGTKMDTASMLDEAIRYVKFLKRQIRLLNNNTGYTPPPPQDQASQAVTTSWVSPPPPPSFGRGGRGVGELI.

Disordered stretches follow at residues 22 to 42 and 68 to 88; these read SSNN…DPIG and SLTT…EEEP. The span at 28–37 shows a compositional bias: basic and acidic residues; the sequence is KNDDHHHQHN. Positions 68 to 77 are enriched in low complexity; that stretch reads SLTTTTLLSG. The span at 78 to 88 shows a compositional bias: acidic residues; that stretch reads DQEDDEDEEEP. The bHLH domain occupies 125–174; that stretch reads ISDDPQSVAARHRRERISERIRILQRLVPGGTKMDTASMLDEAIRYVKFL. The interval 183–224 is disordered; the sequence is NNTGYTPPPPQDQASQAVTTSWVSPPPPPSFGRGGRGVGELI. Residues 194–204 show a composition bias toward polar residues; it reads DQASQAVTTSW. Positions 214 to 224 are enriched in gly residues; sequence GRGGRGVGELI.

In terms of assembly, homodimer. Interacts with SPT. Gynoecium.

The protein localises to the nucleus. Required for the female reproductive tract development and fertility. The sequence is that of Transcription factor HEC3 (HEC3) from Arabidopsis thaliana (Mouse-ear cress).